A 282-amino-acid chain; its full sequence is Pantothenate synthetase (282 aa).

Residue 30-37 (MGFLHDGH) participates in ATP binding. His-37 acts as the Proton donor in catalysis. (R)-pantoate is bound at residue Gln-60. Gln-60 is a binding site for beta-alanine. Residue 146–149 (GQKD) coordinates ATP. Gln-152 is a (R)-pantoate binding site. Residues Ile-175 and 183–186 (KSSR) each bind ATP.

It belongs to the pantothenate synthetase family. In terms of assembly, homodimer.

The protein resides in the cytoplasm. It catalyses the reaction (R)-pantoate + beta-alanine + ATP = (R)-pantothenate + AMP + diphosphate + H(+). Its pathway is cofactor biosynthesis; (R)-pantothenate biosynthesis; (R)-pantothenate from (R)-pantoate and beta-alanine: step 1/1. Functionally, catalyzes the condensation of pantoate with beta-alanine in an ATP-dependent reaction via a pantoyl-adenylate intermediate. The chain is Pantothenate synthetase from Campylobacter jejuni subsp. jejuni serotype O:23/36 (strain 81-176).